Reading from the N-terminus, the 122-residue chain is Interferon alpha-inducible protein 27, mitochondrial (122 aa).

A mitochondrion-targeting transit peptide spans Met-1–Ile-33. A helical transmembrane segment spans residues Ala-34–Thr-57. A Glycyl lysine isopeptide (Lys-Gly) (interchain with G-Cter in ubiquitin) cross-link involves residue Lys-69. The next 2 membrane-spanning stretches (helical) occupy residues Met-71–Leu-91 and Leu-99–Ala-119. The segment at Ile-76–Tyr-122 is mediates interaction with SKP2 and hepatitis C virus non-structural protein NS5A. The tract at residues Thr-103 to Ser-112 is required for hepatitis C virus non-structural protein NS5A degradation.

This sequence belongs to the IFI6/IFI27 family. Homodimer. Interacts with hepatitis C virus/HCV non-structural protein NS5A; promotes the ubiquitin-mediated proteasomal degradation of NS5A. Interacts with SKP2; promotes the ubiquitin-mediated proteasomal degradation of NS5A. Interacts with NR4A1. May interact with BCL2. Post-translationally, ubiquitinated by TRIM21 via 'Lys-6'-linked ubiquitin chains leading to IFI27 mitochondrial migration.

It localises to the mitochondrion membrane. It is found in the nucleus inner membrane. The protein resides in the endoplasmic reticulum membrane. Probable adapter protein involved in different biological processes. Part of the signaling pathways that lead to apoptosis. Involved in type-I interferon-induced apoptosis characterized by a rapid and robust release of cytochrome C from the mitochondria and activation of BAX and caspases 2, 3, 6, 8 and 9. Also functions in TNFSF10-induced apoptosis. May also have a function in the nucleus, where it may be involved in the interferon-induced negative regulation of the transcriptional activity of NR4A1, NR4A2 and NR4A3 through the enhancement of XPO1-mediated nuclear export of these nuclear receptors. May thereby play a role in the vascular response to injury. In the innate immune response, has an antiviral activity towards hepatitis C virus/HCV. May prevent the replication of the virus by recruiting both the hepatitis C virus non-structural protein 5A/NS5A and the ubiquitination machinery via SKP2, promoting the ubiquitin-mediated proteasomal degradation of NS5A. Also promotes virus-induced pyroptosis by activating CASP3 in the mitochondria after 'Lys-6'-linked ubiquitination by TRIM21. The protein is Interferon alpha-inducible protein 27, mitochondrial of Homo sapiens (Human).